We begin with the raw amino-acid sequence, 419 residues long: Endothiapepsin (419 aa).

Positions 1-20 (MSSPLKNALVTAMLAGGALS) are cleaved as a signal peptide. Residues 21–89 (SPTKQHVGIP…QNSTSGLAER (69 aa)) constitute a propeptide, activation peptide. In terms of domain architecture, Peptidase A1 spans 106 to 417 (YITPVQIGTP…GATTPTLGFA (312 aa)). Active-site residues include aspartate 124 and serine 288. Residues cysteine 344 and cysteine 379 are joined by a disulfide bond.

The protein belongs to the peptidase A1 family.

The catalysed reaction is Hydrolysis of proteins with specificity similar to that of pepsin A, prefers hydrophobic residues at P1 and P1', but does not cleave 14-Ala-|-Leu-15 in the B chain of insulin or Z-Glu-Tyr. Clots milk.. This Cryphonectria parasitica (Chestnut blight fungus) protein is Endothiapepsin (EAPA).